Reading from the N-terminus, the 122-residue chain is Small ribosomal subunit protein uS13 (122 aa).

The segment at R99 to K122 is disordered.

This sequence belongs to the universal ribosomal protein uS13 family. As to quaternary structure, part of the 30S ribosomal subunit. Forms a loose heterodimer with protein S19. Forms two bridges to the 50S subunit in the 70S ribosome.

Located at the top of the head of the 30S subunit, it contacts several helices of the 16S rRNA. In the 70S ribosome it contacts the 23S rRNA (bridge B1a) and protein L5 of the 50S subunit (bridge B1b), connecting the 2 subunits; these bridges are implicated in subunit movement. Contacts the tRNAs in the A and P-sites. The polypeptide is Small ribosomal subunit protein uS13 (Rhodopseudomonas palustris (strain BisB5)).